A 224-amino-acid chain; its full sequence is LexA repressor (224 aa).

Positions 38-58 (IREIGDAVGLTSTSSVAHQLR) form a DNA-binding region, H-T-H motif. Positions 71 to 82 (NRPRAVDVRGID) are enriched in basic and acidic residues. The disordered stretch occupies residues 71–96 (NRPRAVDVRGIDDAGTPSATTDVIGS). Residues serine 148 and lysine 185 each act as for autocatalytic cleavage activity in the active site.

The protein belongs to the peptidase S24 family. Homodimer.

It carries out the reaction Hydrolysis of Ala-|-Gly bond in repressor LexA.. In terms of biological role, represses a number of genes involved in the response to DNA damage (SOS response), including recA and lexA. In the presence of single-stranded DNA, RecA interacts with LexA causing an autocatalytic cleavage which disrupts the DNA-binding part of LexA, leading to derepression of the SOS regulon and eventually DNA repair. This Mycobacteroides abscessus (strain ATCC 19977 / DSM 44196 / CCUG 20993 / CIP 104536 / JCM 13569 / NCTC 13031 / TMC 1543 / L948) (Mycobacterium abscessus) protein is LexA repressor.